Reading from the N-terminus, the 409-residue chain is Probable ferredoxin reductase CtmF (409 aa).

FAD is bound by residues Ala-15, Asp-37, Lys-50, Val-83, Asp-279, and Val-298.

Belongs to the FAD-dependent oxidoreductase family. FAD serves as cofactor.

Its pathway is terpene metabolism; monoterpene degradation. Involved in the degradation of the cyclic monoterpene limonene. Probably part of an electron transfer system involved in the oxidation of limonene to perillyl alcohol. The sequence is that of Probable ferredoxin reductase CtmF from Castellaniella defragrans (strain DSM 12143 / CCUG 39792 / 65Phen) (Alcaligenes defragrans).